We begin with the raw amino-acid sequence, 130 residues long: Protein ApaG (130 aa).

An ApaG domain is found at 3–127; it reads RALTKDIEVV…FSLDSPGLLR (125 aa).

The protein is Protein ApaG of Rhizobium leguminosarum bv. trifolii (strain WSM2304).